The chain runs to 278 residues: Proline-rich 28 kDa antigen homolog (278 aa).

The first 28 residues, 1 to 28 (MIQSTQTWRVLAGGLAATAMGVTVFAGG), serve as a signal peptide directing secretion.

The protein to M.tuberculosis Rv0040c.

The chain is Proline-rich 28 kDa antigen homolog from Mycobacterium leprae (strain TN).